The primary structure comprises 358 residues: MTDQDSKPRVTIALGTSSSSSSFKTKKPSRPTHTRRHHARASSNHYSSESEDDDDETGGQRTGRVQAITEISTYGDDNELENRDRSDRRRDRSRDRDRDRNRDGDRNRDRRRDNRSQDRDRHNNRSSRPSRDDDASRSRRRSTSRSRDRDHKPKDPKDLQEPETAPPKWGLTINPKSTTTATSSFHHQRQPRSPSPEEKPPQTLEEQALSSLLSLDNKGSSTASKRKRSHSPSSHDRDRSPDHSDYRAVPIDDFGATLLKQFGWDGKMRGKVKEVTHKHANLAGLGAKDAKGAEELDAWNQKISGRGGGDSRGRDSRPVRLEDYRREENKKKQRMEYRHGESSYKQERERERERRGDR.

2 disordered regions span residues 1 to 250 and 298 to 358; these read MTDQ…RAVP and AWNQ…RGDR. Residues 24 to 40 are compositionally biased toward basic residues; sequence KTKKPSRPTHTRRHHAR. 2 stretches are compositionally biased toward basic and acidic residues: residues 80–137 and 145–160; these read LENR…DASR and RSRD…KDLQ. Positions 174–185 are enriched in polar residues; that stretch reads NPKSTTTATSSF. Composition is skewed to basic and acidic residues over residues 233 to 246 and 309 to 358; these read SSHD…HSDY and GDSR…RGDR.

Belongs to the SPP2 family. In terms of assembly, associated with the spliceosome.

Its subcellular location is the nucleus. Functionally, involved in spliceosome maturation and the first step of pre-mRNA splicing. This is Pre-mRNA-splicing factor spp2 (msp-40) from Neurospora crassa (strain ATCC 24698 / 74-OR23-1A / CBS 708.71 / DSM 1257 / FGSC 987).